The chain runs to 64 residues: MAKAKDVRITISLECTGCSQGNKKYPGVFRYTTQKNRRNTPTRIELKKFCPYCYRRTICREIKK.

It belongs to the bacterial ribosomal protein bL33 family.

The protein resides in the plastid. The protein localises to the chloroplast. This chain is Large ribosomal subunit protein bL33c, found in Huperzia lucidula (Shining clubmoss).